An 88-amino-acid chain; its full sequence is UPF0297 protein YrzL (88 aa).

It belongs to the UPF0297 family.

The chain is UPF0297 protein YrzL (yrzL) from Bacillus subtilis (strain 168).